The following is a 445-amino-acid chain: Eukaryotic translation initiation factor 3 subunit E (445 aa).

The 174-residue stretch at 230-403 (FFNHVKGRDL…GHVVMGAQPL (174 aa)) folds into the PCI domain.

It belongs to the eIF-3 subunit E family. As to quaternary structure, component of the eukaryotic translation initiation factor 3 (eIF-3) complex.

Its subcellular location is the cytoplasm. In terms of biological role, component of the eukaryotic translation initiation factor 3 (eIF-3) complex, which is involved in protein synthesis of a specialized repertoire of mRNAs and, together with other initiation factors, stimulates binding of mRNA and methionyl-tRNAi to the 40S ribosome. The eIF-3 complex specifically targets and initiates translation of a subset of mRNAs involved in cell proliferation. This Bombyx mori (Silk moth) protein is Eukaryotic translation initiation factor 3 subunit E (eIF3-S6).